A 237-amino-acid chain; its full sequence is UDP-2,3-diacylglucosamine hydrolase (237 aa).

Mn(2+)-binding residues include Asp9, His11, Asp42, Asn80, and His115. 80–81 (NR) lines the substrate pocket. Substrate contacts are provided by Asp123, Ser161, Lys165, Lys168, and His196. Residues His196 and His198 each coordinate Mn(2+).

This sequence belongs to the LpxH family. It depends on Mn(2+) as a cofactor.

The protein resides in the cell inner membrane. It carries out the reaction UDP-2-N,3-O-bis[(3R)-3-hydroxytetradecanoyl]-alpha-D-glucosamine + H2O = 2-N,3-O-bis[(3R)-3-hydroxytetradecanoyl]-alpha-D-glucosaminyl 1-phosphate + UMP + 2 H(+). It participates in glycolipid biosynthesis; lipid IV(A) biosynthesis; lipid IV(A) from (3R)-3-hydroxytetradecanoyl-[acyl-carrier-protein] and UDP-N-acetyl-alpha-D-glucosamine: step 4/6. In terms of biological role, hydrolyzes the pyrophosphate bond of UDP-2,3-diacylglucosamine to yield 2,3-diacylglucosamine 1-phosphate (lipid X) and UMP by catalyzing the attack of water at the alpha-P atom. Involved in the biosynthesis of lipid A, a phosphorylated glycolipid that anchors the lipopolysaccharide to the outer membrane of the cell. The protein is UDP-2,3-diacylglucosamine hydrolase of Haemophilus influenzae (strain PittGG).